The primary structure comprises 947 residues: Bifunctional glutamine synthetase adenylyltransferase/adenylyl-removing enzyme (947 aa).

The adenylyl removase stretch occupies residues M1–E440. Positions S450–V947 are adenylyl transferase.

This sequence belongs to the GlnE family. Requires Mg(2+) as cofactor.

The enzyme catalyses [glutamine synthetase]-O(4)-(5'-adenylyl)-L-tyrosine + phosphate = [glutamine synthetase]-L-tyrosine + ADP. The catalysed reaction is [glutamine synthetase]-L-tyrosine + ATP = [glutamine synthetase]-O(4)-(5'-adenylyl)-L-tyrosine + diphosphate. Involved in the regulation of glutamine synthetase GlnA, a key enzyme in the process to assimilate ammonia. When cellular nitrogen levels are high, the C-terminal adenylyl transferase (AT) inactivates GlnA by covalent transfer of an adenylyl group from ATP to specific tyrosine residue of GlnA, thus reducing its activity. Conversely, when nitrogen levels are low, the N-terminal adenylyl removase (AR) activates GlnA by removing the adenylyl group by phosphorolysis, increasing its activity. The regulatory region of GlnE binds the signal transduction protein PII (GlnB) which indicates the nitrogen status of the cell. The polypeptide is Bifunctional glutamine synthetase adenylyltransferase/adenylyl-removing enzyme (Salmonella arizonae (strain ATCC BAA-731 / CDC346-86 / RSK2980)).